Here is a 145-residue protein sequence, read N- to C-terminus: Putative BCoR-like protein 2 (145 aa).

Residues 1 to 27 are compositionally biased toward basic and acidic residues; it reads MKEKLSKKRAEVKGNRSWLEEFLKPSD. Positions 1–58 are disordered; it reads MKEKLSKKRAEVKGNRSWLEEFLKPSDNEEGPPPKNKVLSNNASSQKPTHSSCIPLLR. Residues 38-52 are compositionally biased toward polar residues; sequence VLSNNASSQKPTHSS.

It belongs to the BCOR family.

In Homo sapiens (Human), this protein is Putative BCoR-like protein 2 (BCORP1).